Here is a 245-residue protein sequence, read N- to C-terminus: tRNA (guanine-N(1)-)-methyltransferase (245 aa).

G114 contributes to the S-adenosyl-L-methionine binding site.

It belongs to the RNA methyltransferase TrmD family. As to quaternary structure, homodimer.

The protein localises to the cytoplasm. The catalysed reaction is guanosine(37) in tRNA + S-adenosyl-L-methionine = N(1)-methylguanosine(37) in tRNA + S-adenosyl-L-homocysteine + H(+). Its function is as follows. Specifically methylates guanosine-37 in various tRNAs. This is tRNA (guanine-N(1)-)-methyltransferase from Sphingopyxis alaskensis (strain DSM 13593 / LMG 18877 / RB2256) (Sphingomonas alaskensis).